Consider the following 150-residue polypeptide: MSASADQIQECFSIFDKDNDGKVSVEDIGACLRSLGKSPTMADIEALKTEIGAKEFDINTLKSIYKKPNIKTPQEQQKEMLDAFKALDKEGHGTIQGAELRQLLTTLGDYLSTAEVDELFKEISVDSTTGAVSYASLVNTIVSGYPLGGF.

EF-hand domains are found at residues 3–38 (ASAD…LGKS) and 75–110 (EQQK…LGDY). Aspartate 16, aspartate 18, aspartate 20, lysine 22, and aspartate 27 together coordinate Ca(2+).

In terms of assembly, myosin is a hexamer of 2 heavy chains and 4 light chains (two regulatory light chains and two essential light chains).

In Dictyostelium discoideum (Social amoeba), this protein is Myosin, essential light chain (mlcE).